The sequence spans 511 residues: Xylose import ATP-binding protein XylG (511 aa).

ABC transporter domains follow at residues Leu-6–Glu-244 and Phe-261–Pro-506. Gly-38–Ser-45 is an ATP binding site.

The protein belongs to the ABC transporter superfamily. Xylose importer (TC 3.A.1.2.4) family. In terms of assembly, the complex is composed of two ATP-binding proteins (XylG), two transmembrane proteins (XylH) and a solute-binding protein (XylF).

Its subcellular location is the cell inner membrane. It carries out the reaction D-xylose(out) + ATP + H2O = D-xylose(in) + ADP + phosphate + H(+). Its function is as follows. Part of the ABC transporter complex XylFGH involved in xylose import. Responsible for energy coupling to the transport system. The chain is Xylose import ATP-binding protein XylG from Brucella suis biovar 1 (strain 1330).